Consider the following 396-residue polypeptide: Septu protein PtuA (396 aa).

Its function is as follows. Component of antiviral defense system Septu type I, composed of PtuA and PtuB. Expression of Septu type I in B.subtilis (strain BEST7003) confers resistance to phages SBSphiC and SBSphiJ. May be an ATPase. The chain is Septu protein PtuA from Bacillus thuringiensis.